Reading from the N-terminus, the 236-residue chain is tRNA1(Val) (adenine(37)-N6)-methyltransferase (236 aa).

Belongs to the methyltransferase superfamily. tRNA (adenine-N(6)-)-methyltransferase family.

It is found in the cytoplasm. It catalyses the reaction adenosine(37) in tRNA1(Val) + S-adenosyl-L-methionine = N(6)-methyladenosine(37) in tRNA1(Val) + S-adenosyl-L-homocysteine + H(+). Specifically methylates the adenine in position 37 of tRNA(1)(Val) (anticodon cmo5UAC). This is tRNA1(Val) (adenine(37)-N6)-methyltransferase from Shewanella sp. (strain MR-4).